The sequence spans 216 residues: FMN-dependent NADH:quinone oxidoreductase (216 aa).

Residues serine 10 and serine 15–serine 17 contribute to the FMN site.

The protein belongs to the azoreductase type 1 family. In terms of assembly, homodimer. It depends on FMN as a cofactor.

It carries out the reaction 2 a quinone + NADH + H(+) = 2 a 1,4-benzosemiquinone + NAD(+). The enzyme catalyses N,N-dimethyl-1,4-phenylenediamine + anthranilate + 2 NAD(+) = 2-(4-dimethylaminophenyl)diazenylbenzoate + 2 NADH + 2 H(+). Quinone reductase that provides resistance to thiol-specific stress caused by electrophilic quinones. In terms of biological role, also exhibits azoreductase activity. Catalyzes the reductive cleavage of the azo bond in aromatic azo compounds to the corresponding amines. This Nocardia farcinica (strain IFM 10152) protein is FMN-dependent NADH:quinone oxidoreductase.